The following is a 331-amino-acid chain: Inactive serine/threonine-protein kinase BKN1 (331 aa).

Glycine 2 is lipidated: N-myristoyl glycine. The S-palmitoyl cysteine moiety is linked to residue cysteine 4. Positions 58–328 (DYSVRKFYKG…VLDGLNHIAE (271 aa)) constitute a Protein kinase domain.

The protein belongs to the protein kinase superfamily. Ser/Thr protein kinase family. Restricted to stigma in flowers.

It is found in the cell membrane. Its subcellular location is the nucleus. Functionally, collaboratively with BKN2/SZE2, involved in compatible pollen-stigma interactions. The chain is Inactive serine/threonine-protein kinase BKN1 from Arabidopsis thaliana (Mouse-ear cress).